We begin with the raw amino-acid sequence, 125 residues long: Alpha-endosulfine (125 aa).

The span at 1 to 37 shows a compositional bias: basic and acidic residues; sequence MSDKYIGDSHLEETGEEKQDSQEKEAVTPEKAEEQKL. Residues 1–52 are disordered; that stretch reads MSDKYIGDSHLEETGEEKQDSQEKEAVTPEKAEEQKLKAKYPNLGQKPGGSD. Threonine 28 carries the phosphothreonine; by CDK2 modification. The residue at position 67 (serine 67) is a Phosphoserine; by GWL. The tract at residues 86 to 107 is disordered; it reads GPDKNLVTGDHIPTPQDLPQRK. At threonine 99 the chain carries Phosphothreonine; by CDK2. Residue serine 109 is modified to Phosphoserine; by PKA.

This sequence belongs to the endosulfine family. In terms of assembly, interacts (when phosphorylated at Ser-67) with ppp2r2d. Post-translationally, phosphorylation at Ser-67 by gwl during mitosis is essential for interaction with PPP2R2D (PR55-delta) and subsequent inactivation of PP2A. Phosphorylated by PKA.

The protein localises to the cytoplasm. Functionally, protein phosphatase inhibitor that specifically inhibits protein phosphatase 2A (PP2A) during mitosis. When phosphorylated at Ser-67 during mitosis, specifically interacts with ppp2r2d (PR55-delta) and inhibits its activity, leading to inactivation of PP2A, an essential condition to keep cyclin-B1-CDK1 activity high during M phase. This chain is Alpha-endosulfine (ensa), found in Xenopus laevis (African clawed frog).